Here is a 366-residue protein sequence, read N- to C-terminus: MKINNYIIRRKSKKIYIKNVPIGGDSPISVQSMTNTCTTDINSTISQINKLQKAGADIVRVSIPTLEAAESFKIIKRNVSIPIVADIHFDYRIALKAAEYGADCLRINPGNIGKLNRIISVVSTAKEKKLPIRIGVNSGSLEKDIENKYGINNPKSLFESAMRHVNILEKLNFDMFKVSVKSSDVLTCVQSYKLLASKIDQPLHLGITESGSMLHGSIKSSIGIGLLLSEGIGDTLRVSLAADPIEEVKVGFSILRSLNIRKRGINFIACPTCSRQEFDVINVVNVLEKRLEDVITPMNVSVIGCMVNGLGEANRADIGISGSRNKSILFENGLRNNNKINNEEIIDKLEKYIRKKVKILNLKNNC.

4 residues coordinate [4Fe-4S] cluster: Cys-270, Cys-273, Cys-305, and Glu-312.

It belongs to the IspG family. Requires [4Fe-4S] cluster as cofactor.

It carries out the reaction (2E)-4-hydroxy-3-methylbut-2-enyl diphosphate + oxidized [flavodoxin] + H2O + 2 H(+) = 2-C-methyl-D-erythritol 2,4-cyclic diphosphate + reduced [flavodoxin]. Its pathway is isoprenoid biosynthesis; isopentenyl diphosphate biosynthesis via DXP pathway; isopentenyl diphosphate from 1-deoxy-D-xylulose 5-phosphate: step 5/6. Its function is as follows. Converts 2C-methyl-D-erythritol 2,4-cyclodiphosphate (ME-2,4cPP) into 1-hydroxy-2-methyl-2-(E)-butenyl 4-diphosphate. The sequence is that of 4-hydroxy-3-methylbut-2-en-1-yl diphosphate synthase (flavodoxin) from Wigglesworthia glossinidia brevipalpis.